The sequence spans 490 residues: Betaine aldehyde dehydrogenase (490 aa).

2 residues coordinate K(+): Ile27 and Asp93. Residue 150–152 coordinates NAD(+); sequence GAW. Lys162 (charge relay system) is an active-site residue. 176 to 179 is an NAD(+) binding site; sequence KPSE. Val180 is a binding site for K(+). 230–233 provides a ligand contact to NAD(+); it reads GTTT. Leu246 serves as a coordination point for K(+). Glu252 acts as the Proton acceptor in catalysis. Residues Gly254, Cys286, and Glu387 each contribute to the NAD(+) site. The active-site Nucleophile is Cys286. Cys286 is modified (cysteine sulfenic acid (-SOH)). K(+) contacts are provided by Lys457 and Gly460. Glu464 acts as the Charge relay system in catalysis.

This sequence belongs to the aldehyde dehydrogenase family. As to quaternary structure, dimer of dimers. Requires K(+) as cofactor.

The catalysed reaction is betaine aldehyde + NAD(+) + H2O = glycine betaine + NADH + 2 H(+). The protein operates within amine and polyamine biosynthesis; betaine biosynthesis via choline pathway; betaine from betaine aldehyde: step 1/1. Involved in the biosynthesis of the osmoprotectant glycine betaine. Catalyzes the irreversible oxidation of betaine aldehyde to the corresponding acid. This Pseudomonas putida (strain W619) protein is Betaine aldehyde dehydrogenase.